The following is a 125-amino-acid chain: Protein ELF4-LIKE 1 (125 aa).

Polar residues predominate over residues 1–18 (MEASRNRSLVGNNRSPEM). The tract at residues 1-28 (MEASRNRSLVGNNRSPEMNENDGEDVAA) is disordered.

It belongs to the EARLY FLOWERING 4 family. In terms of assembly, homodimer.

The protein resides in the nucleus. Its function is as follows. Component of the central CCA1/LHY-TOC1 feedback loop in the circadian clock that promotes clock accuracy and is required for sustained rhythms in the absence of daily light/dark cycles. This is Protein ELF4-LIKE 1 (EFL1) from Arabidopsis thaliana (Mouse-ear cress).